We begin with the raw amino-acid sequence, 221 residues long: Thiopurine S-methyltransferase (221 aa).

S-adenosyl-L-methionine is bound by residues tryptophan 12, leucine 47, glutamate 68, and arginine 125.

Belongs to the class I-like SAM-binding methyltransferase superfamily. TPMT family.

The protein resides in the cytoplasm. The catalysed reaction is S-adenosyl-L-methionine + a thiopurine = S-adenosyl-L-homocysteine + a thiopurine S-methylether.. This is Thiopurine S-methyltransferase from Legionella pneumophila (strain Paris).